Consider the following 713-residue polypeptide: Leucine-rich repeat-containing protein 4B (713 aa).

Positions Met-1 to Gly-35 are cleaved as a signal peptide. Residues Ala-36 to Lys-576 lie on the Extracellular side of the membrane. An LRRNT domain is found at Gly-48–Val-86. LRR repeat units lie at residues Asn-87–His-108, His-111–Gly-132, Ser-135–Tyr-156, Lys-159–Arg-180, Ser-183–Gly-205, Asn-208–Val-229, Arg-230–Gly-251, Ser-254–Asp-275, and Ser-278–Pro-299. N-linked (GlcNAc...) asparagine glycosylation is present at Asn-224. Asn-283, Asn-333, Asn-374, Asn-400, Asn-422, Asn-425, Asn-444, and Asn-452 each carry an N-linked (GlcNAc...) asparagine glycan. The LRRCT domain occupies Asn-311 to Ala-363. One can recognise an Ig-like C2-type domain in the interval Pro-364–Asn-452. A disulfide bond links Cys-385 and Cys-436. Residues Thr-497–Lys-551 are disordered. Low complexity predominate over residues Gly-528–Ser-546. The helical transmembrane segment at Ile-577 to Tyr-597 threads the bilayer. Over Lys-598–Ile-713 the chain is Cytoplasmic. Ser-693 carries the post-translational modification Phosphoserine. The tract at residues Ile-694–Ile-713 is disordered. The segment covering Gly-703–Ile-713 has biased composition (basic and acidic residues).

Interacts with PTPRF. Interacts with DLG4. Post-translationally, N-glycosylated. O-glycosylated; contains sialic acid.

Its subcellular location is the membrane. It is found in the presynaptic cell membrane. Synaptic adhesion protein. Regulates the formation of excitatory synapses. The trans-synaptic adhesion between LRRC4B and PTPRF regulates the formation of excitatory synapses in a bidirectional manner. The protein is Leucine-rich repeat-containing protein 4B (LRRC4B) of Homo sapiens (Human).